Here is a 349-residue protein sequence, read N- to C-terminus: Dihydroorotate dehydrogenase (quinone) (349 aa).

Residues 67–71 (AGLDK) and Thr91 contribute to the FMN site. Lys71 is a binding site for substrate. 116 to 120 (NRLGF) serves as a coordination point for substrate. Residues Asn147 and Asn180 each coordinate FMN. Asn180 is a binding site for substrate. Residue Ser183 is the Nucleophile of the active site. Residue Asn185 participates in substrate binding. Lys225 and Thr253 together coordinate FMN. 254–255 (NT) provides a ligand contact to substrate. Residues Gly276, Gly305, and 326–327 (YT) each bind FMN.

The protein belongs to the dihydroorotate dehydrogenase family. Type 2 subfamily. As to quaternary structure, monomer. The cofactor is FMN.

It localises to the cell membrane. It carries out the reaction (S)-dihydroorotate + a quinone = orotate + a quinol. Its pathway is pyrimidine metabolism; UMP biosynthesis via de novo pathway; orotate from (S)-dihydroorotate (quinone route): step 1/1. Functionally, catalyzes the conversion of dihydroorotate to orotate with quinone as electron acceptor. The protein is Dihydroorotate dehydrogenase (quinone) of Bordetella pertussis (strain Tohama I / ATCC BAA-589 / NCTC 13251).